The primary structure comprises 747 residues: Histone-lysine N-methyltransferase EZH1 (747 aa).

The tract at residues Asp-188–Phe-231 is disordered. Residues His-194–Val-211 show a composition bias toward basic and acidic residues. Residue Lys-327 forms a Glycyl lysine isopeptide (Lys-Gly) (interchain with G-Cter in SUMO2) linkage. The segment at Ser-378–Gln-421 is disordered. Positions Glu-382–Gly-393 are enriched in basic and acidic residues. The span at Asp-395–Lys-414 shows a compositional bias: polar residues. Residues Gln-491–Lys-496 carry the Nuclear localization signal motif. In terms of domain architecture, CXC spans Cys-504–Ser-606. The SET domain occupies Lys-613–Arg-728.

The protein belongs to the class V-like SAM-binding methyltransferase superfamily. Histone-lysine methyltransferase family. EZ subfamily. Component of the PRC2/EED-EZH1 complex, which includes EED, EZH1, SUZ12, RBBP4 and AEBP2. The PRC2/EED-EZH1 is less abundant than the PRC2/EED-EZH2 complex, has weak methyltransferase activity and compacts chromatin in the absence of the methyltransferase cofactor S-adenosyl-L-methionine (SAM). Interacts with EZHIP; the interaction blocks EZH1 methyltransferase activity.

The protein resides in the nucleus. It catalyses the reaction L-lysyl(27)-[histone H3] + 3 S-adenosyl-L-methionine = N(6),N(6),N(6)-trimethyl-L-lysyl(27)-[histone H3] + 3 S-adenosyl-L-homocysteine + 3 H(+). Its function is as follows. Polycomb group (PcG) protein. Catalytic subunit of the PRC2/EED-EZH1 complex, which methylates 'Lys-27' of histone H3, leading to transcriptional repression of the affected target gene. Able to mono-, di- and trimethylate 'Lys-27' of histone H3 to form H3K27me1, H3K27me2 and H3K27me3, respectively. Required for embryonic stem cell derivation and self-renewal, suggesting that it is involved in safeguarding embryonic stem cell identity. Compared to EZH2-containing complexes, it is less abundant in embryonic stem cells, has weak methyltransferase activity and plays a less critical role in forming H3K27me3, which is required for embryonic stem cell identity and proper differentiation. The polypeptide is Histone-lysine N-methyltransferase EZH1 (EZH1) (Pongo abelii (Sumatran orangutan)).